Reading from the N-terminus, the 102-residue chain is uncharacterized protein (102 aa).

Transmembrane regions (helical) follow at residues 38–58 (FYVW…QLIL) and 64–84 (VLFL…LFQF).

It localises to the membrane. This is an uncharacterized protein from Saccharomyces cerevisiae (strain ATCC 204508 / S288c) (Baker's yeast).